A 373-amino-acid chain; its full sequence is T-protein (373 aa).

A Chorismate mutase domain is found at 1–90 (MVAELTALRD…ESYSSENDKG (90 aa)). The Prephenate/arogenate dehydrogenase domain maps to 99–361 (RPVVIVGGGG…DYAQRFQSES (263 aa)).

In the C-terminal section; belongs to the prephenate/arogenate dehydrogenase family.

The protein resides in the cytoplasm. It carries out the reaction chorismate = prephenate. The enzyme catalyses prephenate + NAD(+) = 3-(4-hydroxyphenyl)pyruvate + CO2 + NADH. The protein operates within amino-acid biosynthesis; L-tyrosine biosynthesis; (4-hydroxyphenyl)pyruvate from prephenate (NAD(+) route): step 1/1. Its pathway is metabolic intermediate biosynthesis; prephenate biosynthesis; prephenate from chorismate: step 1/1. In Escherichia coli (strain K12), this protein is T-protein (tyrA).